We begin with the raw amino-acid sequence, 925 residues long: Bifunctional uridylyltransferase/uridylyl-removing enzyme (925 aa).

The segment at 1–382 (MVLPTTKDAT…PPGAEVRRVP (382 aa)) is uridylyltransferase. The segment at 383–738 (DSDDFIIDNN…VGFDEARGVT (356 aa)) is uridylyl-removing. The HD domain occupies 498–621 (VDEHLIRCIG…VQSVERMKLL (124 aa)). 2 consecutive ACT domains span residues 739–820 (ELTI…DVMP) and 849–925 (MIEV…NTAE).

It belongs to the GlnD family. Mg(2+) serves as cofactor.

The enzyme catalyses [protein-PII]-L-tyrosine + UTP = [protein-PII]-uridylyl-L-tyrosine + diphosphate. The catalysed reaction is [protein-PII]-uridylyl-L-tyrosine + H2O = [protein-PII]-L-tyrosine + UMP + H(+). With respect to regulation, uridylyltransferase (UTase) activity is inhibited by glutamine, while glutamine activates uridylyl-removing (UR) activity. In terms of biological role, modifies, by uridylylation and deuridylylation, the PII regulatory proteins (GlnB and homologs), in response to the nitrogen status of the cell that GlnD senses through the glutamine level. Under low glutamine levels, catalyzes the conversion of the PII proteins and UTP to PII-UMP and PPi, while under higher glutamine levels, GlnD hydrolyzes PII-UMP to PII and UMP (deuridylylation). Thus, controls uridylylation state and activity of the PII proteins, and plays an important role in the regulation of nitrogen assimilation and metabolism. The sequence is that of Bifunctional uridylyltransferase/uridylyl-removing enzyme from Nitrobacter winogradskyi (strain ATCC 25391 / DSM 10237 / CIP 104748 / NCIMB 11846 / Nb-255).